The following is a 264-amino-acid chain: Acid phosphatase (264 aa).

The signal sequence occupies residues 1–28 (MIKVPRFICMIALTSGILASGLSQSVSA).

The protein belongs to the class A bacterial acid phosphatase family. Mg(2+) is required as a cofactor. Zn(2+) serves as cofactor.

The protein resides in the periplasm. It catalyses the reaction a phosphate monoester + H2O = an alcohol + phosphate. This Zymomonas mobilis subsp. mobilis (strain ATCC 31821 / ZM4 / CP4) protein is Acid phosphatase (phoC).